The following is a 714-amino-acid chain: Stellatatriene synthase (714 aa).

Residues 1–325 (MEYKFSTVVD…RYNSSGSFSD (325 aa)) form a stellata-2,6,19-trien synthase region. Positions 92 and 96 each coordinate Mg(2+). Residues 92–96 (DDVTD) carry the DDXXD motif 1 motif. Residues 276 to 284 (YLKIVEEYK) carry the NSE motif motif. Residues 326–713 (HQLELMKNGV…LRLIMELLKT (388 aa)) are geranylgeranyl diphosphate synthase. Positions 332 to 356 (KNGVPKDPASGSTNGTSNGTSNGTS) are disordered. The span at 341-356 (SGSTNGTSNGTSNGTS) shows a compositional bias: low complexity. Residues K434, R437, and H466 each contribute to the isopentenyl diphosphate site. Residues D473 and D477 each contribute to the Mg(2+) site. The DDXXD motif 2 motif lies at 473 to 477 (DDVED). R482 serves as a coordination point for dimethylallyl diphosphate. R483 serves as a coordination point for isopentenyl diphosphate. K560, T561, Q596, N603, K613, and K623 together coordinate dimethylallyl diphosphate.

The protein in the N-terminal section; belongs to the terpene synthase family. This sequence in the C-terminal section; belongs to the FPP/GGPP synthase family. In terms of assembly, hexamer.

The catalysed reaction is 4 isopentenyl diphosphate + dimethylallyl diphosphate = (2E,6E,10E,14E)-geranylfarnesyl diphosphate + 4 diphosphate. It catalyses the reaction (2E,6E,10E,14E)-geranylfarnesyl diphosphate = stellata-2,6,19-triene + diphosphate. Its pathway is secondary metabolite biosynthesis; terpenoid biosynthesis. Multifunctional diterpene synthase; part of the gene cluster that mediates the biosynthesis of the sesterterpene stellatic acid. The first step in the pathway is performed by the stellatatriene synthase that possesses both prenyl transferase and terpene cyclase activity, converting isopentenyl diphosphate and dimethylallyl diphosphate into geranylgeranyl diphosphate (GGDP) and then converting GGDP into stellata-2,6,19-triene. The cytochrome P450 monooxygenase Stl-P450 then catalyzes three successive oxidation reactions on the C-20 methyl group to generate the carboxylic acid of stellatic acid. The chain is Stellatatriene synthase from Emericella variicolor (Aspergillus stellatus).